The chain runs to 338 residues: Solute carrier family 35 member G5 (338 aa).

The interval 1–21 (MAGSHPYFNLPDSTHPSPPSA) is disordered. Transmembrane regions (helical) follow at residues 37 to 57 (TNGLLVALLGGGLPAGFVGPL), 67 to 87 (LPSLELLICRCLFHLPIALPL), 105 to 125 (CFCALLNVLSIGCAYSAVQVV), 160 to 180 (CGLLGSILGLIIIVGPGLWTL), 190 to 210 (ALGYVQAFLGGLALSLGLLVY), 221 to 241 (TVAFLSGLVGLLGSVPGLFVL), 250 to 270 (LLSWSCVGAVGILALVSFTCV), 281 to 301 (LVCAVLHSEVVVALILQYYVL), and 305 to 325 (VAPSDIMGAGIVLGSIAIITA). Positions 49-174 (LPAGFVGPLS…SILGLIIIVG (126 aa)) constitute an EamA 1 domain. The region spanning 272–325 (YAVTKAHPALVCAVLHSEVVVALILQYYVLHETVAPSDIMGAGIVLGSIAIITA) is the EamA 2 domain.

The protein belongs to the SLC35G solute transporter family.

It localises to the membrane. The polypeptide is Solute carrier family 35 member G5 (SLC35G5) (Pan troglodytes (Chimpanzee)).